Reading from the N-terminus, the 900-residue chain is Protein translocase subunit SecA (900 aa).

ATP-binding positions include Gln87, 105-109, and Asp510; that span reads GEGKT. Residues 857 to 890 form a disordered region; that stretch reads DSLDSLSDGGSDSADGQEYPKVGRNEPCPCGSGK. A compositionally biased stretch (low complexity) spans 860–872; that stretch reads DSLSDGGSDSADG. Residues Cys884, Cys886, Cys895, and His896 each coordinate Zn(2+).

Belongs to the SecA family. As to quaternary structure, monomer and homodimer. Part of the essential Sec protein translocation apparatus which comprises SecA, SecYEG and auxiliary proteins SecDF-YajC and YidC. Zn(2+) serves as cofactor.

It localises to the cell inner membrane. The protein resides in the cytoplasm. The enzyme catalyses ATP + H2O + cellular proteinSide 1 = ADP + phosphate + cellular proteinSide 2.. Part of the Sec protein translocase complex. Interacts with the SecYEG preprotein conducting channel. Has a central role in coupling the hydrolysis of ATP to the transfer of proteins into and across the cell membrane, serving both as a receptor for the preprotein-SecB complex and as an ATP-driven molecular motor driving the stepwise translocation of polypeptide chains across the membrane. The chain is Protein translocase subunit SecA from Marinomonas sp. (strain MWYL1).